A 363-amino-acid chain; its full sequence is Zinc phosphodiesterase ELAC protein 1 (363 aa).

Residues H62, H64, D66, H67, H182, D253, and H313 each contribute to the Zn(2+) site. D66 functions as the Proton acceptor in the catalytic mechanism.

The protein belongs to the RNase Z family. Homodimer. The cofactor is Zn(2+).

It localises to the cytoplasm. Its subcellular location is the cytosol. It is found in the nucleus. It carries out the reaction Endonucleolytic cleavage of RNA, removing extra 3' nucleotides from tRNA precursor, generating 3' termini of tRNAs. A 3'-hydroxy group is left at the tRNA terminus and a 5'-phosphoryl group is left at the trailer molecule.. Functionally, zinc phosphodiesterase, which displays some tRNA 3'-processing endonuclease activity. Specifically involved in tRNA repair: acts downstream of the ribosome-associated quality control (RQC) pathway by removing a 2',3'-cyclic phosphate from tRNAs following cleavage by ANKZF1. tRNAs are then processed by TRNT1. The protein is Zinc phosphodiesterase ELAC protein 1 (ELAC1) of Bos taurus (Bovine).